A 284-amino-acid chain; its full sequence is MPELPEVETIRRGLARHLVGRRIGYAEVFHPRAVRRHSGGAADFTGRLIGRRIQAVLRRGKYLWFALDSDLALLAHLGMSGQFLLADAASPSPKHLRARFAFTDGDPELRFVDQRTFGGLTLAPLIADVPASISHIAPDILDVAFDEAEFHRRFTQRRTGVKRALLDQTLISGVGNIYADEALWRARLHYATPTVDISAATCRRLLAALRAVFRAALRAGGTSFDALYVNVNGQSGFFDRSLAVYGRAGQPCRRCGTAIVREPFMNRSSFRCPACQPVPRRPHW.

Pro-2 acts as the Schiff-base intermediate with DNA in catalysis. Glu-3 (proton donor) is an active-site residue. Catalysis depends on Lys-61, which acts as the Proton donor; for beta-elimination activity. The DNA site is built by His-95, Arg-115, and Arg-157. The segment at 243–277 (AVYGRAGQPCRRCGTAIVREPFMNRSSFRCPACQP) adopts an FPG-type zinc-finger fold. Arg-267 (proton donor; for delta-elimination activity) is an active-site residue.

This sequence belongs to the FPG family. As to quaternary structure, monomer. It depends on Zn(2+) as a cofactor.

It catalyses the reaction Hydrolysis of DNA containing ring-opened 7-methylguanine residues, releasing 2,6-diamino-4-hydroxy-5-(N-methyl)formamidopyrimidine.. It carries out the reaction 2'-deoxyribonucleotide-(2'-deoxyribose 5'-phosphate)-2'-deoxyribonucleotide-DNA = a 3'-end 2'-deoxyribonucleotide-(2,3-dehydro-2,3-deoxyribose 5'-phosphate)-DNA + a 5'-end 5'-phospho-2'-deoxyribonucleoside-DNA + H(+). In terms of biological role, involved in base excision repair of DNA damaged by oxidation or by mutagenic agents. Acts as a DNA glycosylase that recognizes and removes damaged bases. Has a preference for oxidized purines, such as 7,8-dihydro-8-oxoguanine (8-oxoG). Has AP (apurinic/apyrimidinic) lyase activity and introduces nicks in the DNA strand. Cleaves the DNA backbone by beta-delta elimination to generate a single-strand break at the site of the removed base with both 3'- and 5'-phosphates. The sequence is that of Formamidopyrimidine-DNA glycosylase from Acidothermus cellulolyticus (strain ATCC 43068 / DSM 8971 / 11B).